The primary structure comprises 356 residues: Tetraacyldisaccharide 4'-kinase (356 aa).

Position 67 to 74 (67 to 74 (FVGGTGKT)) interacts with ATP.

Belongs to the LpxK family.

The catalysed reaction is a lipid A disaccharide + ATP = a lipid IVA + ADP + H(+). It participates in glycolipid biosynthesis; lipid IV(A) biosynthesis; lipid IV(A) from (3R)-3-hydroxytetradecanoyl-[acyl-carrier-protein] and UDP-N-acetyl-alpha-D-glucosamine: step 6/6. In terms of biological role, transfers the gamma-phosphate of ATP to the 4'-position of a tetraacyldisaccharide 1-phosphate intermediate (termed DS-1-P) to form tetraacyldisaccharide 1,4'-bis-phosphate (lipid IVA). This Herminiimonas arsenicoxydans protein is Tetraacyldisaccharide 4'-kinase.